A 356-amino-acid polypeptide reads, in one-letter code: Glutamine synthetase PR-2 (356 aa).

The 81-residue stretch at Ile19–Gly99 folds into the GS beta-grasp domain. A disordered region spans residues Ala37–Asp66. The GS catalytic domain occupies Lys106 to Pro356.

Belongs to the glutamine synthetase family. In terms of assembly, homooctamer. In terms of tissue distribution, roots.

It is found in the cytoplasm. It catalyses the reaction L-glutamate + NH4(+) + ATP = L-glutamine + ADP + phosphate + H(+). The sequence is that of Glutamine synthetase PR-2 from Phaseolus vulgaris (Kidney bean).